A 203-amino-acid polypeptide reads, in one-letter code: Outer-membrane lipoprotein LolB (203 aa).

Residues 1–21 (MTGRWSPRLLAGLLAALVLSG) form the signal peptide. The N-palmitoyl cysteine moiety is linked to residue Cys22. Cys22 carries the S-diacylglycerol cysteine lipid modification.

This sequence belongs to the LolB family. As to quaternary structure, monomer.

Its subcellular location is the cell outer membrane. Its function is as follows. Plays a critical role in the incorporation of lipoproteins in the outer membrane after they are released by the LolA protein. This is Outer-membrane lipoprotein LolB from Halorhodospira halophila (strain DSM 244 / SL1) (Ectothiorhodospira halophila (strain DSM 244 / SL1)).